Here is a 512-residue protein sequence, read N- to C-terminus: Kynurenine 3-monooxygenase (512 aa).

Belongs to the aromatic-ring hydroxylase family. KMO subfamily. FAD is required as a cofactor.

It localises to the mitochondrion outer membrane. The catalysed reaction is L-kynurenine + NADPH + O2 + H(+) = 3-hydroxy-L-kynurenine + NADP(+) + H2O. It participates in cofactor biosynthesis; NAD(+) biosynthesis; quinolinate from L-kynurenine: step 1/3. Catalyzes the hydroxylation of L-kynurenine (L-Kyn) to form 3-hydroxy-L-kynurenine (L-3OHKyn). Required for synthesis of quinolinic acid. The chain is Kynurenine 3-monooxygenase (bna4) from Neosartorya fischeri (strain ATCC 1020 / DSM 3700 / CBS 544.65 / FGSC A1164 / JCM 1740 / NRRL 181 / WB 181) (Aspergillus fischerianus).